The chain runs to 644 residues: Exoribonuclease 2 (644 aa).

An RNB domain is found at 189 to 516 (RQDLTALNFV…NHRLLKAVIK (328 aa)). One can recognise an S1 motif domain in the interval 561-643 (NTRFAAEIID…ETRSIIARPA (83 aa)).

It belongs to the RNR ribonuclease family. RNase II subfamily.

Its subcellular location is the cytoplasm. It catalyses the reaction Exonucleolytic cleavage in the 3'- to 5'-direction to yield nucleoside 5'-phosphates.. Involved in mRNA degradation. Hydrolyzes single-stranded polyribonucleotides processively in the 3' to 5' direction. In Salmonella dublin (strain CT_02021853), this protein is Exoribonuclease 2.